The chain runs to 372 residues: Cytochrome b (372 aa).

4 helical membrane passes run Phe-25–Val-45, Trp-69–Met-90, Trp-105–Leu-125, and Phe-170–Met-190. Heme b is bound by residues His-75 and His-89. Residues His-174 and His-188 each contribute to the heme b site. Position 193 (His-193) interacts with a ubiquinone. 4 helical membrane passes run Tyr-218–Leu-238, Leu-280–His-300, Phe-312–Thr-332, and Tyr-339–Leu-358.

The protein belongs to the cytochrome b family. The cytochrome bc1 complex contains 3 respiratory subunits (MT-CYB, CYC1 and UQCRFS1), 2 core proteins (UQCRC1 and UQCRC2) and probably 6 low-molecular weight proteins. The cofactor is heme b.

Its subcellular location is the mitochondrion inner membrane. Its function is as follows. Component of the ubiquinol-cytochrome c reductase complex (complex III or cytochrome b-c1 complex) that is part of the mitochondrial respiratory chain. The b-c1 complex mediates electron transfer from ubiquinol to cytochrome c. Contributes to the generation of a proton gradient across the mitochondrial membrane that is then used for ATP synthesis. This is Cytochrome b (MT-CYB) from Sanzinia madagascariensis (Madagascar tree boa).